Reading from the N-terminus, the 206-residue chain is High frequency lysogenization protein HflD homolog (206 aa).

It belongs to the HflD family.

It is found in the cytoplasm. The protein localises to the cell inner membrane. This is High frequency lysogenization protein HflD homolog from Pseudomonas aeruginosa (strain LESB58).